We begin with the raw amino-acid sequence, 263 residues long: Type II restriction enzyme TaqI (263 aa).

Only 15% of purified enzyme (upon expression in E.coli) can be sequenced, suggesting the remainder has a blocked N-terminus.

The enzyme catalyses Endonucleolytic cleavage of DNA to give specific double-stranded fragments with terminal 5'-phosphates.. Functionally, a P subtype restriction enzyme that recognizes the double-stranded sequence 5'-TCGA-3' and cleaves after T-1. This Thermus aquaticus protein is Type II restriction enzyme TaqI (taqIR).